A 345-amino-acid chain; its full sequence is Putative RING-H2 finger protein ATL36 (345 aa).

The first 31 residues, 1-31 (MNIFTRYHLPRVVSGVILPLFLFHLLPYVTC), serve as a signal peptide directing secretion. The helical transmembrane segment at 50–70 (SIIAIVVLAIFISLGMVSCCL) threads the bilayer. The RING-type; atypical zinc finger occupies 123–165 (CAICLSEFEDQETLRWMPPCSHTFHANCIDVWLSSWSTCPVCR). The residue at position 264 (S264) is a Phosphoserine.

The protein belongs to the RING-type zinc finger family. ATL subfamily.

It localises to the membrane. The catalysed reaction is S-ubiquitinyl-[E2 ubiquitin-conjugating enzyme]-L-cysteine + [acceptor protein]-L-lysine = [E2 ubiquitin-conjugating enzyme]-L-cysteine + N(6)-ubiquitinyl-[acceptor protein]-L-lysine.. Its pathway is protein modification; protein ubiquitination. In Arabidopsis thaliana (Mouse-ear cress), this protein is Putative RING-H2 finger protein ATL36 (ATL36).